We begin with the raw amino-acid sequence, 225 residues long: Fibroblast growth factor 11 (225 aa).

Residues 1–28 (MAALASSLIRQKREVREPGGSRPVSAQR) are disordered.

Belongs to the heparin-binding growth factors family. In terms of tissue distribution, brain and eye, and in a segmental pattern of the embryonic body wall. In adult olfactory bulb, hippocampus and most concentrated in Purkinje cell layer of the cerebellum.

It localises to the nucleus. In terms of biological role, probably involved in nervous system development and function. In Mus musculus (Mouse), this protein is Fibroblast growth factor 11 (Fgf11).